The sequence spans 509 residues: Coiled-coil domain-containing protein 181 (509 aa).

A compositionally biased stretch (basic and acidic residues) spans 46–82 (ENINQDLKENETVMEHTKRHSDPDKSLQDEVSPRRND). Disordered stretches follow at residues 46 to 120 (ENIN…EEED) and 241 to 367 (PINN…EEKE). 2 stretches are compositionally biased toward polar residues: residues 243–266 (NNAN…SVSG) and 300–334 (TCPS…STYC). Residues 335–375 (LSPRQKELQKQLEEKREKLKREEERRKIEEEKEKKRENDIV) are a coiled coil. Basic and acidic residues predominate over residues 338–367 (RQKELQKQLEEKREKLKREEERRKIEEEKE).

This sequence belongs to the CCDC181 family. As to quaternary structure, homodimer. Interacts with HOOK1. Interacts with HOOK2. Interacts with HOOK3.

It is found in the cytoplasm. It localises to the cytoskeleton. The protein localises to the cell projection. Its subcellular location is the cilium. The protein resides in the flagellum. Microtubule-binding protein that localizes to the microtubular manchette of elongating spermatids. The protein is Coiled-coil domain-containing protein 181 of Homo sapiens (Human).